The chain runs to 158 residues: 6,7-dimethyl-8-ribityllumazine synthase (158 aa).

Residues F23, 61–63, and 85–87 contribute to the 5-amino-6-(D-ribitylamino)uracil site; these read SME and AVI. 90–91 is a binding site for (2S)-2-hydroxy-3-oxobutyl phosphate; that stretch reads DT. The active-site Proton donor is the H93. Residue Y118 coordinates 5-amino-6-(D-ribitylamino)uracil. Residue R132 coordinates (2S)-2-hydroxy-3-oxobutyl phosphate.

Belongs to the DMRL synthase family.

The enzyme catalyses (2S)-2-hydroxy-3-oxobutyl phosphate + 5-amino-6-(D-ribitylamino)uracil = 6,7-dimethyl-8-(1-D-ribityl)lumazine + phosphate + 2 H2O + H(+). It functions in the pathway cofactor biosynthesis; riboflavin biosynthesis; riboflavin from 2-hydroxy-3-oxobutyl phosphate and 5-amino-6-(D-ribitylamino)uracil: step 1/2. Functionally, catalyzes the formation of 6,7-dimethyl-8-ribityllumazine by condensation of 5-amino-6-(D-ribitylamino)uracil with 3,4-dihydroxy-2-butanone 4-phosphate. This is the penultimate step in the biosynthesis of riboflavin. In Prochlorococcus marinus (strain MIT 9211), this protein is 6,7-dimethyl-8-ribityllumazine synthase.